Reading from the N-terminus, the 250-residue chain is Ribosomal RNA small subunit methyltransferase J (250 aa).

Residues 96–97 and Asp168 each bind S-adenosyl-L-methionine; that span reads RD.

This sequence belongs to the methyltransferase superfamily. RsmJ family.

The protein resides in the cytoplasm. The catalysed reaction is guanosine(1516) in 16S rRNA + S-adenosyl-L-methionine = N(2)-methylguanosine(1516) in 16S rRNA + S-adenosyl-L-homocysteine + H(+). Specifically methylates the guanosine in position 1516 of 16S rRNA. This Neisseria meningitidis serogroup C (strain 053442) protein is Ribosomal RNA small subunit methyltransferase J.